A 355-amino-acid polypeptide reads, in one-letter code: Protein-glutamate methylesterase/protein-glutamine glutaminase 3 (355 aa).

Positions arginine 8–glutamate 126 constitute a Response regulatory domain. Aspartate 59 is subject to 4-aspartylphosphate. Positions proline 152 to glutamine 337 constitute a CheB-type methylesterase domain. Catalysis depends on residues serine 166, histidine 193, and aspartate 284.

The protein belongs to the CheB family. Phosphorylated by CheA. Phosphorylation of the N-terminal regulatory domain activates the methylesterase activity.

Its subcellular location is the cytoplasm. It carries out the reaction [protein]-L-glutamate 5-O-methyl ester + H2O = L-glutamyl-[protein] + methanol + H(+). It catalyses the reaction L-glutaminyl-[protein] + H2O = L-glutamyl-[protein] + NH4(+). In terms of biological role, involved in chemotaxis. Part of a chemotaxis signal transduction system that modulates chemotaxis in response to various stimuli. Catalyzes the demethylation of specific methylglutamate residues introduced into the chemoreceptors (methyl-accepting chemotaxis proteins or MCP) by CheR. Also mediates the irreversible deamidation of specific glutamine residues to glutamic acid. In Myxococcus xanthus (strain DK1622), this protein is Protein-glutamate methylesterase/protein-glutamine glutaminase 3.